A 69-amino-acid polypeptide reads, in one-letter code: Small, acid-soluble spore protein A (69 aa).

The protein belongs to the alpha/beta-type SASP family.

Functionally, SASP are bound to spore DNA. They are double-stranded DNA-binding proteins that cause DNA to change to an a-like conformation. They protect the DNA backbone from chemical and enzymatic cleavage and are thus involved in dormant spore's high resistance to UV light. The protein is Small, acid-soluble spore protein A (sspA) of Bacillus subtilis (strain 168).